A 41-amino-acid polypeptide reads, in one-letter code: Phospholipase A2 homolog nigroviriditoxin acidic subunit A (41 aa).

This sequence belongs to the phospholipase A2 family. Group II subfamily. D49 sub-subfamily. Nigroviriditoxin is a heterodimer of an acidic subunit A and a basic subunit B. In terms of tissue distribution, expressed by the venom gland.

It localises to the secreted. In terms of biological role, heterodimer A-B: Nigroviriditoxin possesses phospholipase A2 (PLA2) activity. It consists of a non-covalent association of a basic PLA2 subunit B with a non-enzymatic subunit A. Its function is as follows. Subunit A: The acidic subunit of nigroviriditoxin probably is a heterotrimer of three disulfide-linked chains generated by post-translational maturation of a PLA2-like precursor. It appears to have no PLA2 activity of its own, instead inhibiting the catalytic activity of subunit B. It is not toxic to mice by itself but increases toxicity of subunit B. This chain is Phospholipase A2 homolog nigroviriditoxin acidic subunit A, found in Bothriechis nigroviridis (Black-speckled palm pit viper).